The primary structure comprises 483 residues: Altronate oxidoreductase (483 aa).

An NAD(+)-binding site is contributed by 18–29 (IIQFGEGNFLRA).

Belongs to the mannitol dehydrogenase family. UxaB subfamily.

It catalyses the reaction D-altronate + NAD(+) = keto-D-tagaturonate + NADH + H(+). It participates in carbohydrate metabolism; pentose and glucuronate interconversion. The polypeptide is Altronate oxidoreductase (Escherichia coli (strain 55989 / EAEC)).